We begin with the raw amino-acid sequence, 494 residues long: Endoglucanase 1 (494 aa).

A signal peptide spans 1 to 25 (MDCSSPLSLFHLLLVCTVMVKCCSA). D82 acts as the Nucleophile in catalysis. Residues N254 and N359 are each glycosylated (N-linked (GlcNAc...) asparagine). Active-site residues include H411, D462, and E471.

It belongs to the glycosyl hydrolase 9 (cellulase E) family.

The enzyme catalyses Endohydrolysis of (1-&gt;4)-beta-D-glucosidic linkages in cellulose, lichenin and cereal beta-D-glucans.. Its function is as follows. Involved in ripening fruit process. The chain is Endoglucanase 1 (CEL1) from Persea americana (Avocado).